The chain runs to 191 residues: Signal peptidase IB (191 aa).

Over 1–7 (MKKEILE) the chain is Cytoplasmic. Residues 8-28 (WIISIAVAFVILFIVGKFIVT) form a helical membrane-spanning segment. The Extracellular portion of the chain corresponds to 29–191 (PYTIKGESMD…HNFNPENTKN (163 aa)). Catalysis depends on residues serine 36 and lysine 77.

Belongs to the peptidase S26 family.

Its subcellular location is the cell membrane. The catalysed reaction is Cleavage of hydrophobic, N-terminal signal or leader sequences from secreted and periplasmic proteins.. Essential for cell viability. The protein is Signal peptidase IB (spsB) of Staphylococcus aureus (strain COL).